The chain runs to 416 residues: Succinate--CoA ligase [ADP-forming] subunit beta (416 aa).

The transit peptide at 1 to 14 (MLRMAPKTVGAVRN) directs the protein to the hydrogenosome. ATP is bound by residues K64, 71-73 (GRG), and E132. N224 and D242 together coordinate Mg(2+). Substrate is bound by residues N293 and 350-352 (GIM).

Belongs to the succinate/malate CoA ligase beta subunit family. Heterodimer of an alpha and a beta subunit. The cofactor is Mg(2+).

It localises to the hydrogenosome. It catalyses the reaction succinate + ATP + CoA = succinyl-CoA + ADP + phosphate. It participates in carbohydrate metabolism; tricarboxylic acid cycle; succinate from succinyl-CoA (ligase route): step 1/1. In terms of biological role, succinyl-CoA synthetase functions in the citric acid cycle (TCA), coupling the hydrolysis of succinyl-CoA to the synthesis of ATP and thus represents the only step of substrate-level phosphorylation in the TCA. The beta subunit provides nucleotide specificity of the enzyme and binds the substrate succinate, while the binding sites for coenzyme A and phosphate are found in the alpha subunit. This chain is Succinate--CoA ligase [ADP-forming] subunit beta (SCSb), found in Blastocystis sp. subtype 1 (strain ATCC 50177 / NandII).